The sequence spans 201 residues: Ribonuclease HII (201 aa).

The region spanning 15 to 201 (QRVAGVDEVG…FRPVRRFLEA (187 aa)) is the RNase H type-2 domain. Residues Asp-21, Glu-22, and Asp-113 each coordinate a divalent metal cation.

Belongs to the RNase HII family. It depends on Mn(2+) as a cofactor. Requires Mg(2+) as cofactor.

The protein resides in the cytoplasm. The catalysed reaction is Endonucleolytic cleavage to 5'-phosphomonoester.. Functionally, endonuclease that specifically degrades the RNA of RNA-DNA hybrids. The chain is Ribonuclease HII from Nitrosococcus oceani (strain ATCC 19707 / BCRC 17464 / JCM 30415 / NCIMB 11848 / C-107).